Consider the following 530-residue polypeptide: MGGEELSEFEKQRLANIAERDALLKKLTQDAQSVGLFPPKMPKGASPAGDKAKKKKPAPKKVKKEEAAAAAPVPRRMSSRLRGIAAESEVAKRKADEHDAALQEAERAKRMRKSDSFSLSEMLVSGQKLSGESLLGVDVVTKGVAMPYQRTFSDEDIKKTTDKDLKALREEMSGLGLWDAWEPNRIKLTPERIYAMTFHPSESKPLIFAGDKMGHLGVLDASQTKPVSAATHDEDEEDDDDDPDPVLTTLKPHTRTISCMTIHPSKPTHLYTASYDSSIREMDLEKTTSVERYAPASTADDVPISGLDMALDDPHCLYWTTLDGEFGRYDMRTPRQDSATRWTLSDKKIGGFSLYPTHPHYFATASLDRTMRLWDLRKLSHKSPVAVGEHESRLSVSHAAFNGAGQVATSSYDDSLKIYDFGAKGIASWKPGHSLSDAQMKPDVVVRHNCQTGRWVTILRPQWQQNPQSHIQRFCIGNMNRFVDIYSGSGDQLAQLGGDGITAVPAVAVFHRSKNWVAGGTASGKICLWM.

Disordered stretches follow at residues 34 to 115 (VGLF…RKSD) and 224 to 250 (TKPV…LTTL). Positions 52–62 (AKKKKPAPKKV) are enriched in basic residues. A compositionally biased stretch (basic and acidic residues) spans 89-108 (EVAKRKADEHDAALQEAERA). One copy of the WD 1 repeat lies at 188–229 (LTPERIYAMTFHPSESKPLIFAGDKMGHLGVLDASQTKPVSA). Residues 233–244 (DEDEEDDDDDPD) are compositionally biased toward acidic residues. WD repeat units follow at residues 252-292 (PHTR…SVER), 302-339 (VPIS…QDSA), 344-384 (LSDK…HKSP), 389-430 (EHES…ASWK), 453-496 (GRWV…LAQL), and 499-530 (DGIT…CLWM).

Belongs to the WD repeat DDB2/WDR76 family.

Its function is as follows. DNA-binding protein that binds to both single- and double-stranded DNA. Binds preferentially to UV-damaged DNA. May be involved in DNA-metabolic processes. This Aspergillus terreus (strain NIH 2624 / FGSC A1156) protein is DNA damage-binding protein cmr1.